The sequence spans 146 residues: Large ribosomal subunit protein uL15 (146 aa).

The segment at methionine 1–valine 45 is disordered. Basic and acidic residues predominate over residues lysine 15 to lysine 28.

This sequence belongs to the universal ribosomal protein uL15 family. In terms of assembly, part of the 50S ribosomal subunit.

Its function is as follows. Binds to the 23S rRNA. The sequence is that of Large ribosomal subunit protein uL15 from Mycobacteroides abscessus (strain ATCC 19977 / DSM 44196 / CCUG 20993 / CIP 104536 / JCM 13569 / NCTC 13031 / TMC 1543 / L948) (Mycobacterium abscessus).